Here is a 1881-residue protein sequence, read N- to C-terminus: Genome polyprotein (1881 aa).

The segment covering 1 to 16 (MAQTLSKISNKENASS) has biased composition (polar residues). The disordered stretch occupies residues 1–93 (MAQTLSKISN…SHLKPASTDV (93 aa)). Over residues 37–50 (EPLDHDSRRGRDPV) the composition is skewed to basic and acidic residues. Residues 564–720 (DKVISCCTRR…DKWKSDNPGK (157 aa)) form the SF3 helicase domain. 590–597 (GPPGCGKT) serves as a coordination point for ATP. Tyr1093 is subject to O-(5'-phospho-RNA)-tyrosine. Positions 1188-1341 (GVTHKNAIVS…KLIVPYVKVD (154 aa)) constitute a Peptidase C24 domain. Catalysis depends on for 3CLpro activity residues His1222, Glu1243, and Cys1305. The RdRp catalytic domain occupies 1593–1718 (HDRYCVDYSK…IVPPLISSVM (126 aa)).

As to quaternary structure, homodimer. Interacts with NTPase, protein p30 and protease-polymerase p76. Interacts with capsid protein VP1 and protease-polymerase p76. Interacts with host IEF4e; this interaction plays a role in translation of viral proteins. In terms of assembly, homooligomer. Interacts with Vpg, protein p32 and may interact with capsid protein VP1. Post-translationally, specific enzymatic cleavages in vivo yield mature proteins. Pro-Pol is first autocatalytically cleaved, then processes the whole polyprotein. VPg is uridylylated by the polymerase and is covalently attached to the 5'-end of the polyadenylated genomic and subgenomic RNAs. This uridylylated form acts as a nucleotide-peptide primer for the polymerase.

It is found in the host endoplasmic reticulum membrane. The enzyme catalyses a ribonucleoside 5'-triphosphate + H2O = a ribonucleoside 5'-diphosphate + phosphate + H(+). It carries out the reaction RNA(n) + a ribonucleoside 5'-triphosphate = RNA(n+1) + diphosphate. It catalyses the reaction Endopeptidase with a preference for cleavage when the P1 position is occupied by Glu-|-Xaa and the P1' position is occupied by Gly-|-Yaa.. In terms of biological role, together with NTPase and NS4, initiates the formation of the replication complex. Induces the proliferation of the host smooth ER membranes forming long tubular structures. These remodeled membranes probably form the viral factories that contain the replication complex. Displays NTPase activity, but no helicase activity. Induces the formation of convoluted membranes derived from the host ER. These remodeled membranes probably form the viral factories that contain the replication complex. Together with NS2 and NS4, initiates the formation of the replication complex. Functionally, probable key protein responsible for the formation of membrane alterations by the virus. Induces the formation of convoluted membranes derived from the host ER. These remodeled membranes probably form the viral factories that contain the replication complex. Together with NS2 and NTPase, initiates the formation of the replication complex. Its function is as follows. Viral genome-linked protein is covalently linked to the 5'-end of the positive-strand, negative-strand genomic RNAs and subgenomic RNA. Acts as a genome-linked replication primer. May recruit ribosome to viral RNA thereby promoting viral proteins translation. Interacts with host translation initiation complex to allow the translation of viral proteins. In terms of biological role, protease-polymerase p76 processes the polyprotein: Pro-Pol is first released by autocleavage, then all other proteins are cleaved. Cleaves host translation initiation factor eIF4G1, eIF4G2 and PABP1 thereby inducing a shutdown of host protein synthesis. This shutdown may not prevent viral mRNA from being translated since viral Vpg replaces the cap. Also functions as an RNA-directed RNA polymerase, which replicates genomic and antigenomic viral RNA by recognizing specific signals. Also transcribes a subgenomic mRNA by initiating RNA synthesis internally on antigenomic RNA. This sgRNA codes for structural proteins. Catalyzes the covalent attachment VPg with viral RNAs. This Vesicular exanthema of swine virus serotype A48 (isolate Swine/United States/A48/1948) (VESV) protein is Genome polyprotein.